The primary structure comprises 197 residues: Probable GTP-binding protein EngB (197 aa).

The EngB-type G domain occupies 25–197 (SAPEIAFAGR…VRDEFFKFTR (173 aa)). GTP-binding positions include 33-40 (GRSNVGKS), 60-64 (GCTRQ), 79-82 (DLPG), 146-149 (TKID), and 177-179 (MSI). Residues Ser40 and Thr62 each coordinate Mg(2+).

The protein belongs to the TRAFAC class TrmE-Era-EngA-EngB-Septin-like GTPase superfamily. EngB GTPase family. Requires Mg(2+) as cofactor.

Its function is as follows. Necessary for normal cell division and for the maintenance of normal septation. This chain is Probable GTP-binding protein EngB, found in Wolbachia sp. subsp. Drosophila simulans (strain wRi).